The primary structure comprises 489 residues: Mitochondrial distribution and morphology protein 34 (489 aa).

Residues 1–205 (MSFNINWDSI…LPSVLYKFSQ (205 aa)) enclose the SMP-LTD domain.

This sequence belongs to the MDM34 family. As to quaternary structure, component of the ER-mitochondria encounter structure (ERMES) or MDM complex, composed of MMM1, MDM10, MDM12 and MDM34.

It is found in the mitochondrion outer membrane. In terms of biological role, component of the ERMES/MDM complex, which serves as a molecular tether to connect the endoplasmic reticulum (ER) and mitochondria. Components of this complex are involved in the control of mitochondrial shape and protein biogenesis, and function in nonvesicular lipid trafficking between the ER and mitochondria. MDM34 is required for the interaction of the ER-resident membrane protein MMM1 and the outer mitochondrial membrane-resident beta-barrel protein MDM10. The protein is Mitochondrial distribution and morphology protein 34 of Komagataella phaffii (strain GS115 / ATCC 20864) (Yeast).